A 479-amino-acid polypeptide reads, in one-letter code: MASAGLYRRVLPSPPAIDFASPEGKKIFVEALGQGTMEGFFKLVSYYQTQSEPAYCGLATLTVVLNALSIDPGRKWKGPWRWFDDSMLDCCEPLEKIKVQGITFGKVACLARCNGAHVEAFRSNESTVSDFRDRVISCCSSEDRHLIVSYHRSGLKQTGEGHFSPIGGYHAERDMVLILDVTRYKYPPHWVPLTLLWDAMNTIDRATGLQRGYMIISKLKRAPSILYTVSCRHEGWSSVAKFLTENVPLLLKSEDLKDIQEVLSVVFKSPPSELREFITWIAEVRRQEDGNLTLSEEEKGRLAIKADILEQIRTTTLFKHVTSWLDSQRSRCRTIAKLQDRDMLPELAAGVCCQGACLLTGCCLPGGKCCSQIDVKHLNVDHKNIVTLVSGTVASGSSSEQGVDVLVPLCQMGPEGHCIGMHPSTADVLTVLLLALPLHTWSGIKEEKLCAEVTSLLTTENLPPLLQEEVRFSLETVLF.

Positions 1 to 221 (MASAGLYRRV…GYMIISKLKR (221 aa)) constitute a Peptidase C83 domain. Catalysis depends on residues C56, H162, and D180.

Belongs to the phytochelatin synthase family. In terms of tissue distribution, expressed in roots, nodules and leaves.

It carries out the reaction [Glu(-Cys)](n)-Gly + glutathione + H(+) = [Glu(-Cys)](n+1)-Gly + glycine. Requires cadmium for activity. In terms of biological role, involved in the synthesis of phytochelatins (PC) and homophytochelatins (hPC), the heavy-metal-binding peptides of plants. The polypeptide is Glutathione gamma-glutamylcysteinyltransferase 3 (PCS3) (Lotus japonicus (Lotus corniculatus var. japonicus)).